A 157-amino-acid chain; its full sequence is Transcription elongation factor GreA (157 aa).

Belongs to the GreA/GreB family.

Its function is as follows. Necessary for efficient RNA polymerase transcription elongation past template-encoded arresting sites. The arresting sites in DNA have the property of trapping a certain fraction of elongating RNA polymerases that pass through, resulting in locked ternary complexes. Cleavage of the nascent transcript by cleavage factors such as GreA or GreB allows the resumption of elongation from the new 3'terminus. GreA releases sequences of 2 to 3 nucleotides. The chain is Transcription elongation factor GreA from Caulobacter sp. (strain K31).